A 224-amino-acid polypeptide reads, in one-letter code: UPF0758 protein Rpic_2712 (224 aa).

Residues 102–224 form the MPN domain; that stretch reads TFESAQSVKD…VYGFLEHGKM (123 aa). 3 residues coordinate Zn(2+): H173, H175, and D186. The JAMM motif signature appears at 173–186; it reads HNHPTGNTEPSESD.

The protein belongs to the UPF0758 family.

The protein is UPF0758 protein Rpic_2712 of Ralstonia pickettii (strain 12J).